The sequence spans 395 residues: Tyrosine--tRNA ligase (395 aa).

Residues 42 to 51 (PTAPDIHLGH) carry the 'HIGH' region motif. The 'KMSKS' region signature appears at 226–230 (KMSKS). Lysine 229 provides a ligand contact to ATP. The 61-residue stretch at 334–394 (IAISNLLKDA…GKRKFARITL (61 aa)) folds into the S4 RNA-binding domain.

This sequence belongs to the class-I aminoacyl-tRNA synthetase family. TyrS type 2 subfamily. Homodimer.

It is found in the cytoplasm. The enzyme catalyses tRNA(Tyr) + L-tyrosine + ATP = L-tyrosyl-tRNA(Tyr) + AMP + diphosphate + H(+). Catalyzes the attachment of tyrosine to tRNA(Tyr) in a two-step reaction: tyrosine is first activated by ATP to form Tyr-AMP and then transferred to the acceptor end of tRNA(Tyr). The polypeptide is Tyrosine--tRNA ligase (Photobacterium profundum (strain SS9)).